Here is a 265-residue protein sequence, read N- to C-terminus: 3-deoxy-manno-octulosonate cytidylyltransferase (265 aa).

Belongs to the KdsB family.

The protein localises to the cytoplasm. It carries out the reaction 3-deoxy-alpha-D-manno-oct-2-ulosonate + CTP = CMP-3-deoxy-beta-D-manno-octulosonate + diphosphate. Its pathway is nucleotide-sugar biosynthesis; CMP-3-deoxy-D-manno-octulosonate biosynthesis; CMP-3-deoxy-D-manno-octulosonate from 3-deoxy-D-manno-octulosonate and CTP: step 1/1. It participates in bacterial outer membrane biogenesis; lipopolysaccharide biosynthesis. Functionally, activates KDO (a required 8-carbon sugar) for incorporation into bacterial lipopolysaccharide in Gram-negative bacteria. This chain is 3-deoxy-manno-octulosonate cytidylyltransferase, found in Delftia acidovorans (strain DSM 14801 / SPH-1).